A 298-amino-acid chain; its full sequence is Transcription factor RHD6 (298 aa).

Disordered stretches follow at residues 1 to 58 (MALV…SDHQ) and 157 to 213 (TGSR…AKNR). Residues 15-27 (SKQNSSSSEDLSS) are compositionally biased toward low complexity. 2 stretches are compositionally biased toward polar residues: residues 157–168 (TGSRNESLSPKS) and 177–190 (GEST…SSGV). Low complexity predominate over residues 191–205 (TGKTKPKPTTSPKDP). Positions 201 to 214 (SPKDPQSLAAKNRR) are basic motif. Positions 201-250 (SPKDPQSLAAKNRRERISERLKILQELVPNGTKVDLVTMLEKAISYVKFL) constitute a bHLH domain. Residues 215–250 (ERISERLKILQELVPNGTKVDLVTMLEKAISYVKFL) are helix-loop-helix motif.

Homodimer. Forms heterodimers with RSL1. Interacts with TIFY10B/JAZ2, TIFY6A/JAZ4, TIFY5A/JAZ8, TIFY7/JAZ9 and TIFY9/JAZ10. Expressed constitutively in flowers. Expressed in root epidermal hair cells.

It localises to the nucleus. Transcription factor that is specifically required for the development of root hairs. Acts with RSL1 to positively regulate root hair development. Acts downstream of genes that regulate epidermal pattern formation, such as GL2. Targets directly RSL4, another transcription factor involved in the regulation of root hair elongation. Acts with RSL1 as transcription factor that integrates a jasmonate (JA) signaling pathway that stimulates root hair growth. This chain is Transcription factor RHD6, found in Arabidopsis thaliana (Mouse-ear cress).